We begin with the raw amino-acid sequence, 276 residues long: Urease accessory protein UreD (276 aa).

This sequence belongs to the UreD family. UreD, UreF and UreG form a complex that acts as a GTP-hydrolysis-dependent molecular chaperone, activating the urease apoprotein by helping to assemble the nickel containing metallocenter of UreC. The UreE protein probably delivers the nickel.

It localises to the cytoplasm. In terms of biological role, required for maturation of urease via the functional incorporation of the urease nickel metallocenter. The chain is Urease accessory protein UreD from Polaromonas naphthalenivorans (strain CJ2).